We begin with the raw amino-acid sequence, 555 residues long: CTP synthase (555 aa).

The segment at 1 to 265 (MTRYIFITGG…GNRVCEKLNI (265 aa)) is amidoligase domain. Ser13 contacts CTP. Residue Ser13 participates in UTP binding. ATP-binding positions include 14–19 (SLGKGI) and Asp71. Mg(2+) contacts are provided by Asp71 and Glu139. CTP contacts are provided by residues 146–148 (DIE), 186–191 (KTKPTQ), and Lys222. Residues 186 to 191 (KTKPTQ) and Lys222 contribute to the UTP site. The region spanning 290–541 (TVAVVGKYVD…IKAGLAAKEA (252 aa)) is the Glutamine amidotransferase type-1 domain. Gly351 lines the L-glutamine pocket. Catalysis depends on Cys378, which acts as the Nucleophile; for glutamine hydrolysis. L-glutamine is bound by residues 379 to 382 (LGMQ), Glu402, and Arg469. Residues His514 and Glu516 contribute to the active site.

The protein belongs to the CTP synthase family. In terms of assembly, homotetramer.

The catalysed reaction is UTP + L-glutamine + ATP + H2O = CTP + L-glutamate + ADP + phosphate + 2 H(+). It catalyses the reaction L-glutamine + H2O = L-glutamate + NH4(+). It carries out the reaction UTP + NH4(+) + ATP = CTP + ADP + phosphate + 2 H(+). The protein operates within pyrimidine metabolism; CTP biosynthesis via de novo pathway; CTP from UDP: step 2/2. With respect to regulation, allosterically activated by GTP, when glutamine is the substrate; GTP has no effect on the reaction when ammonia is the substrate. The allosteric effector GTP functions by stabilizing the protein conformation that binds the tetrahedral intermediate(s) formed during glutamine hydrolysis. Inhibited by the product CTP, via allosteric rather than competitive inhibition. In terms of biological role, catalyzes the ATP-dependent amination of UTP to CTP with either L-glutamine or ammonia as the source of nitrogen. Regulates intracellular CTP levels through interactions with the four ribonucleotide triphosphates. This chain is CTP synthase, found in Coxiella burnetii (strain RSA 331 / Henzerling II).